The following is a 600-amino-acid chain: UvrABC system protein C (600 aa).

In terms of domain architecture, GIY-YIG spans 15–100 (NSAGVYQYFN…IKQLHPKYNI (86 aa)). Residues 203–238 (SILIKNLEKQMLVLAQNENYEEAAKVRDQIVTIKDL) form the UVR domain.

Belongs to the UvrC family. As to quaternary structure, interacts with UvrB in an incision complex.

It localises to the cytoplasm. The UvrABC repair system catalyzes the recognition and processing of DNA lesions. UvrC both incises the 5' and 3' sides of the lesion. The N-terminal half is responsible for the 3' incision and the C-terminal half is responsible for the 5' incision. In Campylobacter jejuni subsp. jejuni serotype O:23/36 (strain 81-176), this protein is UvrABC system protein C.